The primary structure comprises 250 residues: Cysteine proteinase inhibitor 12 (250 aa).

The signal sequence occupies residues Met1–Ala32. 2 Cystatin domains span residues Gly49–Gly137 and Pro156–Val202. A Secondary area of contact motif is present at residues Gln93 to Gly97.

The protein belongs to the cystatin family. Phytocystatin subfamily.

The protein localises to the secreted. Functionally, specific inhibitor of cysteine proteinases. Probably involved in the regulation of endogenous processes and in defense against pests and pathogens. This is Cysteine proteinase inhibitor 12 from Oryza sativa subsp. japonica (Rice).